The following is a 586-amino-acid chain: Phosphomethylpyrimidine synthase (586 aa).

The disordered stretch occupies residues 1-59 (MKQSVSAEQIELKSSLPGSKKVYVDGPREGMKVPMREIEQSETNGVPNPPIRVYDTSGP). Basic and acidic residues predominate over residues 22–39 (VYVDGPREGMKVPMREIE). Substrate contacts are provided by residues Asn193, Met222, Tyr251, His287, 307–309 (SRG), 348–351 (DGLR), and Glu387. A Zn(2+)-binding site is contributed by His391. Substrate is bound at residue Tyr414. His455 is a binding site for Zn(2+). [4Fe-4S] cluster-binding residues include Cys535, Cys538, and Cys543.

The protein belongs to the ThiC family. It depends on [4Fe-4S] cluster as a cofactor.

The catalysed reaction is 5-amino-1-(5-phospho-beta-D-ribosyl)imidazole + S-adenosyl-L-methionine = 4-amino-2-methyl-5-(phosphooxymethyl)pyrimidine + CO + 5'-deoxyadenosine + formate + L-methionine + 3 H(+). Its pathway is cofactor biosynthesis; thiamine diphosphate biosynthesis. Its function is as follows. Catalyzes the synthesis of the hydroxymethylpyrimidine phosphate (HMP-P) moiety of thiamine from aminoimidazole ribotide (AIR) in a radical S-adenosyl-L-methionine (SAM)-dependent reaction. This is Phosphomethylpyrimidine synthase from Bacillus cereus (strain ATCC 14579 / DSM 31 / CCUG 7414 / JCM 2152 / NBRC 15305 / NCIMB 9373 / NCTC 2599 / NRRL B-3711).